A 908-amino-acid chain; its full sequence is SH3 and PX domain-containing protein 2B (908 aa).

The PX domain occupies 5-129 (RSIVEVKVLD…QFFETRPEDL (125 aa)). Y25 carries the post-translational modification Phosphotyrosine. SH3 domains lie at 152–211 (MVLE…GQDG) and 221–280 (EEEE…KNSG). Phosphoserine is present on residues S279 and S291. Disordered regions lie at residues 280-300 (GEPL…ALDL) and 315-366 (ELLN…PPIP). Over residues 315-337 (ELLNNQRDGRFEGRLVPDGDVKQ) the composition is skewed to basic and acidic residues. Residues 338–347 (RSPKMRQRPP) show a composition bias toward basic residues. An SH3 3 domain is found at 368–427 (QVEEEYYTIAEFQTTIPDGISFQAGLKVEVIEKSLSGWWYIQMEDKEGWAPATFIDKYKK). The disordered stretch occupies residues 455-832 (TENNTGPEAV…LGPRVTGKVG (378 aa)). Composition is skewed to basic and acidic residues over residues 486–499 (KDWK…RKAS), 516–546 (QEEK…KMEP), 569–584 (LARD…DKSK), 595–606 (CGHKVLAKEVKK), and 615–625 (SKAELSEEKVD). Phosphoserine occurs at positions 499 and 528. Y661 carries the phosphotyrosine modification. A compositionally biased stretch (basic and acidic residues) spans 671 to 684 (KSQEKALLDGESHH). Pro residues predominate over residues 754–764 (VVPPRRPPPPK). S840 is subject to Phosphoserine. In terms of domain architecture, SH3 4 spans 847 to 908 (PKDSLYVAVA…IPSNYLRKKP (62 aa)).

It belongs to the SH3PXD2 family. In terms of assembly, interacts with NOXO1. Interacts (via SH3 domains) with NOXA1; the interaction is direct. Interacts with ADAM15. Interacts with FASLG. In terms of processing, phosphorylated in SRC-transformed cells. Highly expressed in the stromal-vascular fraction of white adipose tissue with moderate expression in heart, skeletal muscle and the mature adipocyte fraction of white adipose tissue. Also expressed in brain, spleen, kidney and liver. Expressed in white and brown adipose tissues, eye, lung, heart, brain, spleen, stomach, liver and skeletal muscle (at protein level). Not expressed in kidney or bone marrow.

It is found in the cytoplasm. The protein resides in the cell projection. The protein localises to the podosome. Its function is as follows. Adapter protein involved in invadopodia and podosome formation and extracellular matrix degradation. Binds matrix metalloproteinases (ADAMs), NADPH oxidases (NOXs) and phosphoinositides. Acts as an organizer protein that allows NOX1- or NOX3-dependent reactive oxygen species (ROS) generation and ROS localization. Plays a role in mitotic clonal expansion during the immediate early stage of adipocyte differentiation. The protein is SH3 and PX domain-containing protein 2B (Sh3pxd2b) of Mus musculus (Mouse).